The following is a 384-amino-acid chain: Queuine tRNA-ribosyltransferase (384 aa).

D103 functions as the Proton acceptor in the catalytic mechanism. Residues 103–107 (DSGGF), D157, Q200, and G227 each bind substrate. Residues 258 to 264 (GVGTYRE) are RNA binding. The active-site Nucleophile is the D277. Residues 282-286 (TRLAR) form an RNA binding; important for wobble base 34 recognition region. Residues C315, C317, C320, and H346 each contribute to the Zn(2+) site.

This sequence belongs to the queuine tRNA-ribosyltransferase family. As to quaternary structure, homodimer. Within each dimer, one monomer is responsible for RNA recognition and catalysis, while the other monomer binds to the replacement base PreQ1. Requires Zn(2+) as cofactor.

The catalysed reaction is 7-aminomethyl-7-carbaguanine + guanosine(34) in tRNA = 7-aminomethyl-7-carbaguanosine(34) in tRNA + guanine. It participates in tRNA modification; tRNA-queuosine biosynthesis. Functionally, catalyzes the base-exchange of a guanine (G) residue with the queuine precursor 7-aminomethyl-7-deazaguanine (PreQ1) at position 34 (anticodon wobble position) in tRNAs with GU(N) anticodons (tRNA-Asp, -Asn, -His and -Tyr). Catalysis occurs through a double-displacement mechanism. The nucleophile active site attacks the C1' of nucleotide 34 to detach the guanine base from the RNA, forming a covalent enzyme-RNA intermediate. The proton acceptor active site deprotonates the incoming PreQ1, allowing a nucleophilic attack on the C1' of the ribose to form the product. After dissociation, two additional enzymatic reactions on the tRNA convert PreQ1 to queuine (Q), resulting in the hypermodified nucleoside queuosine (7-(((4,5-cis-dihydroxy-2-cyclopenten-1-yl)amino)methyl)-7-deazaguanosine). The chain is Queuine tRNA-ribosyltransferase from Synechococcus elongatus (strain ATCC 33912 / PCC 7942 / FACHB-805) (Anacystis nidulans R2).